Here is a 163-residue protein sequence, read N- to C-terminus: 2-C-methyl-D-erythritol 2,4-cyclodiphosphate synthase (163 aa).

The a divalent metal cation site is built by D12 and H14. 4-CDP-2-C-methyl-D-erythritol 2-phosphate contacts are provided by residues 12–14 (DVH) and 38–39 (HS). H46 is an a divalent metal cation binding site. 4-CDP-2-C-methyl-D-erythritol 2-phosphate-binding positions include 60–62 (DIG), 136–139 (TTSE), F143, and R146.

The protein belongs to the IspF family. In terms of assembly, homotrimer. A divalent metal cation serves as cofactor.

The catalysed reaction is 4-CDP-2-C-methyl-D-erythritol 2-phosphate = 2-C-methyl-D-erythritol 2,4-cyclic diphosphate + CMP. Its pathway is isoprenoid biosynthesis; isopentenyl diphosphate biosynthesis via DXP pathway; isopentenyl diphosphate from 1-deoxy-D-xylulose 5-phosphate: step 4/6. In terms of biological role, involved in the biosynthesis of isopentenyl diphosphate (IPP) and dimethylallyl diphosphate (DMAPP), two major building blocks of isoprenoid compounds. Catalyzes the conversion of 4-diphosphocytidyl-2-C-methyl-D-erythritol 2-phosphate (CDP-ME2P) to 2-C-methyl-D-erythritol 2,4-cyclodiphosphate (ME-CPP) with a corresponding release of cytidine 5-monophosphate (CMP). This Xanthomonas oryzae pv. oryzae (strain MAFF 311018) protein is 2-C-methyl-D-erythritol 2,4-cyclodiphosphate synthase.